The following is a 206-amino-acid chain: Orotate phosphoribosyltransferase (206 aa).

Residues R97, K98, K101, and 125–133 (NDVIASGRS) contribute to the 5-phospho-alpha-D-ribose 1-diphosphate site. R157 is a binding site for orotate.

This sequence belongs to the purine/pyrimidine phosphoribosyltransferase family. PyrE subfamily. As to quaternary structure, homodimer. The cofactor is Mg(2+).

It catalyses the reaction orotidine 5'-phosphate + diphosphate = orotate + 5-phospho-alpha-D-ribose 1-diphosphate. Its pathway is pyrimidine metabolism; UMP biosynthesis via de novo pathway; UMP from orotate: step 1/2. Its function is as follows. Catalyzes the transfer of a ribosyl phosphate group from 5-phosphoribose 1-diphosphate to orotate, leading to the formation of orotidine monophosphate (OMP). This Chlamydia caviae (strain ATCC VR-813 / DSM 19441 / 03DC25 / GPIC) (Chlamydophila caviae) protein is Orotate phosphoribosyltransferase.